Consider the following 184-residue polypeptide: Latex serine proteinase inhibitor (184 aa).

Cysteine 45 and cysteine 89 form a disulfide bridge. Residues asparagine 84 and asparagine 90 are each glycosylated (N-linked (GlcNAc...) asparagine). Cysteine 142 and cysteine 153 are joined by a disulfide.

It belongs to the protease inhibitor I3 (leguminous Kunitz-type inhibitor) family.

Its subcellular location is the secreted. It localises to the extracellular space. The polypeptide is Latex serine proteinase inhibitor (Carica papaya (Papaya)).